The primary structure comprises 173 residues: Co-chaperone protein HscB homolog (173 aa).

One can recognise a J domain in the interval 5-77 (CHFAQFDLQP…PRRALYLLTL (73 aa)).

This sequence belongs to the HscB family. In terms of assembly, interacts with HscA and stimulates its ATPase activity.

In terms of biological role, co-chaperone involved in the maturation of iron-sulfur cluster-containing proteins. Seems to help targeting proteins to be folded toward HscA. The sequence is that of Co-chaperone protein HscB homolog from Pseudomonas paraeruginosa (strain DSM 24068 / PA7) (Pseudomonas aeruginosa (strain PA7)).